The sequence spans 155 residues: Medium/long-chain acyl-CoA thioesterase YigI (155 aa).

It belongs to the YigI thioesterase family.

The protein localises to the cytoplasm. The catalysed reaction is a fatty acyl-CoA + H2O = a fatty acid + CoA + H(+). It catalyses the reaction a medium-chain fatty acyl-CoA + H2O = a medium-chain fatty acid + CoA + H(+). It carries out the reaction a long-chain fatty acyl-CoA + H2O = a long-chain fatty acid + CoA + H(+). Functionally, displays thioesterase activity against medium- to long-chain acyl-CoA substrates. Is involved in the thioesterase-dependent beta-oxidation pathway of (9Z,11E)-octadecadienoate (conjugated linoleic acid or CLA), along with TesB and FadM. In Shigella flexneri, this protein is Medium/long-chain acyl-CoA thioesterase YigI (yigI).